We begin with the raw amino-acid sequence, 288 residues long: Polyamine aminopropyltransferase (288 aa).

One can recognise a PABS domain in the interval 9-242 (SEWLDEYHQG…GLWSWTFASM (234 aa)). Residue glutamine 36 participates in S-methyl-5'-thioadenosine binding. Histidine 67 and aspartate 91 together coordinate spermidine. S-methyl-5'-thioadenosine is bound by residues glutamate 111 and 143–144 (NG). The active-site Proton acceptor is aspartate 162. Residue proline 169 coordinates S-methyl-5'-thioadenosine.

Belongs to the spermidine/spermine synthase family. Homodimer or homotetramer.

It localises to the cytoplasm. It catalyses the reaction S-adenosyl 3-(methylsulfanyl)propylamine + putrescine = S-methyl-5'-thioadenosine + spermidine + H(+). It participates in amine and polyamine biosynthesis; spermidine biosynthesis; spermidine from putrescine: step 1/1. In terms of biological role, catalyzes the irreversible transfer of a propylamine group from the amino donor S-adenosylmethioninamine (decarboxy-AdoMet) to putrescine (1,4-diaminobutane) to yield spermidine. In Prochlorococcus marinus (strain NATL2A), this protein is Polyamine aminopropyltransferase.